We begin with the raw amino-acid sequence, 664 residues long: Cytoskeleton-associated protein 2 (664 aa).

Positions 1–38 (MAESRKRFLGRAARNPLPVTRDLQLPPTRRDQPAFREQ) are disordered. Basic and acidic residues predominate over residues 28–38 (TRRDQPAFREQ). Residues 160-319 (PKQDSNVSKK…ASKDAARTDS (160 aa)) are association with alpha- and beta-tubulin. Ser186 carries the post-translational modification Phosphoserine. Disordered stretches follow at residues 254-273 (IRSL…SRPL), 283-328 (LDKE…MVKP), 366-393 (GKGK…NPVG), and 512-545 (AHAT…KVEV). The segment covering 300–309 (GSSQAPSRSI) has biased composition (polar residues). Residues 366-375 (GKGKGLKRPP) show a composition bias toward basic residues. The span at 533–545 (PGEENEHHGKVEV) shows a compositional bias: basic and acidic residues. At Thr561 the chain carries Phosphothreonine. Ser577 carries the phosphoserine modification. Thr579 is modified (phosphothreonine). Ser584 carries the post-translational modification Phosphoserine.

This sequence belongs to the CKAP2 family. Associates with alpha- and beta-tubulins.

Its subcellular location is the cytoplasm. The protein resides in the cytoskeleton. It is found in the spindle. It localises to the spindle pole. Functionally, possesses microtubule stabilizing properties. Involved in regulating aneuploidy, cell cycling, and cell death in a p53-dependent manner. In Mus musculus (Mouse), this protein is Cytoskeleton-associated protein 2.